Here is a 66-residue protein sequence, read N- to C-terminus: Large ribosomal subunit protein eL24 (66 aa).

Zn(2+) is bound by residues Cys6, Cys9, Cys32, and Cys36. A C4-type zinc finger spans residues 6–36 (CSFCGKSIEPASGFLYVRKDGSVLNFCSRKC).

Belongs to the eukaryotic ribosomal protein eL24 family. As to quaternary structure, part of the 50S ribosomal subunit. Forms a cluster with proteins L3 and L14. Requires Zn(2+) as cofactor.

In terms of biological role, binds to the 23S rRNA. The sequence is that of Large ribosomal subunit protein eL24 from Picrophilus torridus (strain ATCC 700027 / DSM 9790 / JCM 10055 / NBRC 100828 / KAW 2/3).